The following is a 237-amino-acid chain: MNNLINIKEVEAKLKFTFTQPQLLVTALTHPSYRNETVTITEDSERLEFLGDAVLCLIVTEHLFLLFPSMDEGTLSTARAALINAVSCCQYTDALGLGEYLLIGKGERIQNERGRTSAYANLFEAILGAVYLDGGLAPARQITVPLLPSKKDILPLMLGNPKNRLQQLTQKQLRTLPVYQSTPWISPQGAPGYHIRVIVNDEIWGEGFALSKKEAEKLAAQEALDANDYKDKNTVDL.

Positions 7 to 135 (IKEVEAKLKF…ILGAVYLDGG (129 aa)) constitute an RNase III domain. Residue E48 coordinates Mg(2+). The active site involves D52. The Mg(2+) site is built by N121 and E124. E124 is a catalytic residue. One can recognise a DRBM domain in the interval 160-229 (NPKNRLQQLT…AQEALDANDY (70 aa)).

It belongs to the ribonuclease III family. In terms of assembly, homodimer. Requires Mg(2+) as cofactor.

The protein resides in the cytoplasm. The enzyme catalyses Endonucleolytic cleavage to 5'-phosphomonoester.. Digests double-stranded RNA. Involved in the processing of primary rRNA transcript to yield the immediate precursors to the large and small rRNAs (23S and 16S). Processes some mRNAs, and tRNAs when they are encoded in the rRNA operon. Processes pre-crRNA and tracrRNA of type II CRISPR loci if present in the organism. The chain is Ribonuclease 3 from Chlamydia felis (strain Fe/C-56) (Chlamydophila felis).